The primary structure comprises 965 residues: Vacuolar membrane protease (965 aa).

Over 1-16 the chain is Cytoplasmic; that stretch reads MARPSLSPSNPLGFTP. The chain crosses the membrane as a helical span at residues 17–37; the sequence is WPVTVITAVVYLALVVPLLVV. Residues 38–387 are Vacuolar-facing; it reads HHVVPSAPSS…SAFVVFELHT (350 aa). N-linked (GlcNAc...) asparagine glycosylation is found at asparagine 53 and asparagine 119. Residues histidine 171 and aspartate 183 each coordinate Zn(2+). Glutamate 217 (proton acceptor) is an active-site residue. Zn(2+) is bound by residues glutamate 218, glutamate 243, and histidine 316. A helical membrane pass occupies residues 388 to 408; sequence LFALSVTLLVVAPLVLLVTSI. The Cytoplasmic portion of the chain corresponds to 409–441; the sequence is ALARADKMYLFRSSASPEDSDGSEVVPLHGVRG. A helical transmembrane segment spans residues 442-462; it reads FFRFPFLLVIPTAVTVGLAYL. The Vacuolar segment spans residues 463-472; it reads VTKFNPYIIH. A helical transmembrane segment spans residues 473–493; sequence SSEYAVWSMMISAWVFLAWFV. The Cytoplasmic segment spans residues 494 to 507; that stretch reads SRVADFARPSAFHR. The chain crosses the membrane as a helical span at residues 508–528; it reads VYTLTWLFLVEWVFLVISTVY. The Vacuolar portion of the chain corresponds to 529–532; sequence ENQY. The helical transmembrane segment at 533–553 threads the bilayer; that stretch reads GLAGGYFVLFVFAGTFLATWI. Residues 554–661 lie on the Cytoplasmic side of the membrane; the sequence is SYLELFALPR…WSIHLPKWVW (108 aa). The interval 577-610 is disordered; sequence RTSSHGSRLGTASGEDVEDGEDEDDDGTTAEATE. Residues 591-604 show a composition bias toward acidic residues; that stretch reads EDVEDGEDEDDDGT. A helical membrane pass occupies residues 662-682; it reads VLQFLLTAPLVLIFVGPLALL. Topologically, residues 683-698 are vacuolar; the sequence is LTSALRQTGQDGSPSL. Residues 699-719 form a helical membrane-spanning segment; the sequence is FIYIAVAALTTLLFIPLLPFI. Topologically, residues 720 to 725 are cytoplasmic; sequence HRYTHH. A helical transmembrane segment spans residues 726 to 746; that stretch reads IPLFLLCVFAGTLIYNLVAFP. Over 747–965 the chain is Vacuolar; sequence FSPANRLKLF…LVEGSRRFEV (219 aa). 2 N-linked (GlcNAc...) asparagine glycosylation sites follow: asparagine 793 and asparagine 830.

Belongs to the peptidase M28 family. It depends on Zn(2+) as a cofactor.

The protein resides in the vacuole membrane. Functionally, may be involved in vacuolar sorting and osmoregulation. The protein is Vacuolar membrane protease of Aspergillus fumigatus (strain CBS 144.89 / FGSC A1163 / CEA10) (Neosartorya fumigata).